Consider the following 59-residue polypeptide: Large ribosomal subunit protein bL32 (59 aa).

The tract at residues 1–59 is disordered; sequence MAVQQNRKSRSRRGMRRSHDALSSAALSIDPTTGEKHRRHHVTPDGFYRGKKVVEVSQD. Residues 7–16 are compositionally biased toward basic residues; that stretch reads RKSRSRRGMR.

It belongs to the bacterial ribosomal protein bL32 family.

The protein is Large ribosomal subunit protein bL32 of Hahella chejuensis (strain KCTC 2396).